A 296-amino-acid polypeptide reads, in one-letter code: Cbb3-type cytochrome c oxidase subunit CcoP (296 aa).

The Cytoplasmic portion of the chain corresponds to 1–31 (MAQNYKDELSGVETTGHEWDGLRELNNPLPK). Residues 32-52 (WWLYLFYVCIAWAMVYYVFYP) traverse the membrane as a helical segment. The Periplasmic segment spans residues 53–296 (AWPLGKTYTK…VYVHNLGGGK (244 aa)). Cytochrome c domains follow at residues 108–200 (FAMA…LSLN) and 207–293 (GKVA…HNLG). The heme c site is built by C121, C124, H125, M175, C220, C223, H224, and M270.

This sequence belongs to the CcoP / FixP family. As to quaternary structure, component of the cbb3-type cytochrome c oxidase at least composed of CcoN, CcoO, CcoQ and CcoP. Heme c is required as a cofactor.

Its subcellular location is the cell inner membrane. It participates in energy metabolism; oxidative phosphorylation. C-type cytochrome. Part of the cbb3-type cytochrome c oxidase complex. CcoP subunit is required for transferring electrons from donor cytochrome c via its heme groups to CcoO subunit. From there, electrons are shuttled to the catalytic binuclear center of CcoN subunit where oxygen reduction takes place. The complex also functions as a proton pump. The sequence is that of Cbb3-type cytochrome c oxidase subunit CcoP from Azospirillum sp. (strain B510).